A 449-amino-acid polypeptide reads, in one-letter code: Maltoporin (449 aa).

Positions 1-24 are cleaved as a signal peptide; it reads MITLRKLPLAVAVAAGVMSAQAMA.

This sequence belongs to the porin LamB (TC 1.B.3) family. In terms of assembly, homotrimer formed of three 18-stranded antiparallel beta-barrels, containing three independent channels.

Its subcellular location is the cell outer membrane. It catalyses the reaction beta-maltose(in) = beta-maltose(out). Its function is as follows. Involved in the transport of maltose and maltodextrins. The polypeptide is Maltoporin (Citrobacter koseri (strain ATCC BAA-895 / CDC 4225-83 / SGSC4696)).